A 440-amino-acid chain; its full sequence is Thymidine phosphorylase (440 aa).

Belongs to the thymidine/pyrimidine-nucleoside phosphorylase family. In terms of assembly, homodimer.

The catalysed reaction is thymidine + phosphate = 2-deoxy-alpha-D-ribose 1-phosphate + thymine. It participates in pyrimidine metabolism; dTMP biosynthesis via salvage pathway; dTMP from thymine: step 1/2. Its function is as follows. The enzymes which catalyze the reversible phosphorolysis of pyrimidine nucleosides are involved in the degradation of these compounds and in their utilization as carbon and energy sources, or in the rescue of pyrimidine bases for nucleotide synthesis. The polypeptide is Thymidine phosphorylase (Enterobacter sp. (strain 638)).